The following is a 355-amino-acid chain: Uroporphyrinogen decarboxylase (355 aa).

Substrate contacts are provided by residues 27–31 (RQAGR), Asp-78, Tyr-155, Ser-210, and His-328.

The protein belongs to the uroporphyrinogen decarboxylase family. In terms of assembly, homodimer.

The protein localises to the cytoplasm. The enzyme catalyses uroporphyrinogen III + 4 H(+) = coproporphyrinogen III + 4 CO2. It functions in the pathway porphyrin-containing compound metabolism; protoporphyrin-IX biosynthesis; coproporphyrinogen-III from 5-aminolevulinate: step 4/4. Catalyzes the decarboxylation of four acetate groups of uroporphyrinogen-III to yield coproporphyrinogen-III. The chain is Uroporphyrinogen decarboxylase from Pseudomonas aeruginosa (strain UCBPP-PA14).